The sequence spans 749 residues: Amyloid-beta A4 precursor protein-binding family A member 2 (749 aa).

Disordered stretches follow at residues 1–94 (MAHQ…PEEE) and 130–343 (DTDE…NNIP). Position 11 is a phosphoserine (Ser-11). Positions 70–80 (GDSSSDYVNNT) are enriched in polar residues. 2 stretches are compositionally biased toward acidic residues: residues 81-94 (SEEE…PEEE) and 131-142 (TDECQEAVEEWT). Residues 185–270 (HYCASKEGYQ…SAEACPPIKA (86 aa)) form an STXBP1-binding region. Ser-208 carries the post-translational modification Phosphoserine. The span at 218–227 (DLEDQEEDID) shows a compositional bias: acidic residues. Over residues 237-247 (LSMTSITSASE) the composition is skewed to polar residues. Basic and acidic residues predominate over residues 305–315 (RTPEERPKWPH). Residues 366–555 (LIDGIIFAAN…IINTQEMYND (190 aa)) enclose the PID domain. PDZ domains are found at residues 568–653 (ELQL…NIVS) and 659–735 (TVLI…MPAA).

In terms of assembly, part of a multimeric complex containing STXBP1 and syntaxin-1. Binds to the cytoplasmic domain of amyloid-beta protein, and to the nuclear factor NF-kappa-B/p65 via its PDZ domain. Interacts with the N-terminal domain of NECAB3.

In terms of biological role, putative function in synaptic vesicle exocytosis by binding to STXBP1, an essential component of the synaptic vesicle exocytotic machinery. May modulate processing of the amyloid-beta precursor protein (APP) and hence formation of APP-beta. The polypeptide is Amyloid-beta A4 precursor protein-binding family A member 2 (APBA2) (Pongo abelii (Sumatran orangutan)).